Consider the following 392-residue polypeptide: Selenide, water dikinase 1 (392 aa).

Cys31 is a catalytic residue. ATP is bound by residues Lys32, 67-69 (GMD), Asp87, Asp110, and 161-164 (GGQT). Mg(2+) is bound at residue Asp69. Asp110 lines the Mg(2+) pocket. Asp265 provides a ligand contact to Mg(2+).

It belongs to the selenophosphate synthase 1 family. Class II subfamily. In terms of assembly, homodimer. Mg(2+) serves as cofactor.

The protein localises to the cell membrane. The protein resides in the nucleus membrane. The catalysed reaction is hydrogenselenide + ATP + H2O = selenophosphate + AMP + phosphate + 2 H(+). In terms of biological role, synthesizes selenophosphate from selenide and ATP. The polypeptide is Selenide, water dikinase 1 (sephs1) (Xenopus laevis (African clawed frog)).